The primary structure comprises 445 residues: 3-phosphoshikimate 1-carboxyvinyltransferase (445 aa).

Residues Lys-21, Ser-22, and Arg-26 each coordinate 3-phosphoshikimate. A phosphoenolpyruvate-binding site is contributed by Lys-21. Phosphoenolpyruvate contacts are provided by Gly-92 and Arg-120. Positions 165, 166, 307, and 334 each coordinate 3-phosphoshikimate. Gln-166 serves as a coordination point for phosphoenolpyruvate. The active-site Proton acceptor is Asp-307. Phosphoenolpyruvate contacts are provided by Arg-338, Arg-379, and Lys-405.

This sequence belongs to the EPSP synthase family. As to quaternary structure, monomer.

It localises to the cytoplasm. The enzyme catalyses 3-phosphoshikimate + phosphoenolpyruvate = 5-O-(1-carboxyvinyl)-3-phosphoshikimate + phosphate. Its pathway is metabolic intermediate biosynthesis; chorismate biosynthesis; chorismate from D-erythrose 4-phosphate and phosphoenolpyruvate: step 6/7. Catalyzes the transfer of the enolpyruvyl moiety of phosphoenolpyruvate (PEP) to the 5-hydroxyl of shikimate-3-phosphate (S3P) to produce enolpyruvyl shikimate-3-phosphate and inorganic phosphate. The protein is 3-phosphoshikimate 1-carboxyvinyltransferase of Chlamydia pneumoniae (Chlamydophila pneumoniae).